Consider the following 1171-residue polypeptide: Phytochrome B (1171 aa).

Over residues 1 to 19 (MASGSRATPTRSPSSARPA) the composition is skewed to low complexity. Positions 1–53 (MASGSRATPTRSPSSARPAAPRHQHHHSQSSGGSTSRAGGGGGGGGGGGGGAA) are disordered. Gly residues predominate over residues 38 to 52 (AGGGGGGGGGGGGGA). The 184-residue stretch at 259–442 (DVKLLCDTVV…AFGLQLNMEL (184 aa)) folds into the GAF domain. C364 contacts phytochromobilin. 2 PAS domains span residues 661–732 (VARE…LRGD) and 795–866 (DYKA…MIVL). Residues 943–1161 (YIYQEIKNPL…FFHIVLELPQ (219 aa)) form the Histidine kinase domain.

The protein belongs to the phytochrome family. As to quaternary structure, homodimer. In terms of processing, contains one covalently linked phytochromobilin chromophore.

In terms of biological role, regulatory photoreceptor which exists in two forms that are reversibly interconvertible by light: the Pr form that absorbs maximally in the red region of the spectrum and the Pfr form that absorbs maximally in the far-red region. Photoconversion of Pr to Pfr induces an array of morphogenic responses, whereas reconversion of Pfr to Pr cancels the induction of those responses. Pfr controls the expression of a number of nuclear genes including those encoding the small subunit of ribulose-bisphosphate carboxylase, chlorophyll A/B binding protein, protochlorophyllide reductase, rRNA, etc. It also controls the expression of its own gene(s) in a negative feedback fashion. In Oryza sativa subsp. japonica (Rice), this protein is Phytochrome B (PHYB).